A 433-amino-acid polypeptide reads, in one-letter code: Serine hydroxymethyltransferase (433 aa).

(6S)-5,6,7,8-tetrahydrofolate contacts are provided by residues leucine 132 and 136–138 (GHL). Lysine 241 is subject to N6-(pyridoxal phosphate)lysine.

It belongs to the SHMT family. As to quaternary structure, homodimer. Pyridoxal 5'-phosphate is required as a cofactor.

It localises to the cytoplasm. It carries out the reaction (6R)-5,10-methylene-5,6,7,8-tetrahydrofolate + glycine + H2O = (6S)-5,6,7,8-tetrahydrofolate + L-serine. It functions in the pathway one-carbon metabolism; tetrahydrofolate interconversion. Its pathway is amino-acid biosynthesis; glycine biosynthesis; glycine from L-serine: step 1/1. Its function is as follows. Catalyzes the reversible interconversion of serine and glycine with tetrahydrofolate (THF) serving as the one-carbon carrier. This reaction serves as the major source of one-carbon groups required for the biosynthesis of purines, thymidylate, methionine, and other important biomolecules. Also exhibits THF-independent aldolase activity toward beta-hydroxyamino acids, producing glycine and aldehydes, via a retro-aldol mechanism. The chain is Serine hydroxymethyltransferase from Methylobacterium sp. (strain 4-46).